The primary structure comprises 138 residues: Small ribosomal subunit protein uS11c (138 aa).

The protein belongs to the universal ribosomal protein uS11 family. As to quaternary structure, part of the 30S ribosomal subunit.

It is found in the plastid. This chain is Small ribosomal subunit protein uS11c, found in Cuscuta gronovii (Common dodder).